Reading from the N-terminus, the 185-residue chain is Peptide deformylase 2 (185 aa).

Residues Cys-108 and His-150 each coordinate Fe cation. Residue Glu-151 is part of the active site. His-154 is a Fe cation binding site.

This sequence belongs to the polypeptide deformylase family. It depends on Fe(2+) as a cofactor.

It catalyses the reaction N-terminal N-formyl-L-methionyl-[peptide] + H2O = N-terminal L-methionyl-[peptide] + formate. Its function is as follows. Removes the formyl group from the N-terminal Met of newly synthesized proteins. Requires at least a dipeptide for an efficient rate of reaction. N-terminal L-methionine is a prerequisite for activity but the enzyme has broad specificity at other positions. This is Peptide deformylase 2 from Nitrosomonas europaea (strain ATCC 19718 / CIP 103999 / KCTC 2705 / NBRC 14298).